The following is a 170-amino-acid chain: MLIIGKKLSPYALLSISGLLAASDQAVKWLVQQSMAYGEYVSVTPFFNWVHLWNTGAAFSLFANGGGWQRYFFIGIAVVVSIFLIKLILENRHKGEAIAYSLILGGAMGNLIDRVFRGYVVDSFDFYWRDWHWPAFNLADIAIVLGALLFVSSSLLGKKANTNAEPDGSD.

2 helical membrane-spanning segments follow: residues 71–91 (YFFI…ILEN) and 97–116 (AIAY…DRVF). Catalysis depends on residues D122 and D140. The chain crosses the membrane as a helical span at residues 131–151 (WHWPAFNLADIAIVLGALLFV).

Belongs to the peptidase A8 family.

It localises to the cell inner membrane. The enzyme catalyses Release of signal peptides from bacterial membrane prolipoproteins. Hydrolyzes -Xaa-Yaa-Zaa-|-(S,diacylglyceryl)Cys-, in which Xaa is hydrophobic (preferably Leu), and Yaa (Ala or Ser) and Zaa (Gly or Ala) have small, neutral side chains.. It participates in protein modification; lipoprotein biosynthesis (signal peptide cleavage). In terms of biological role, this protein specifically catalyzes the removal of signal peptides from prolipoproteins. In Serratia marcescens, this protein is Lipoprotein signal peptidase.